Here is a 1661-residue protein sequence, read N- to C-terminus: ATP-dependent bile acid permease (1661 aa).

Residues 1 to 33 lie on the Lumenal side of the membrane; the sequence is MHHVLNSTRPDHRFWFYDDVTQYGRTKYLNYYT. Residue N6 is glycosylated (N-linked (GlcNAc...) asparagine). The chain crosses the membrane as a helical span at residues 34–54; that stretch reads PLVLLIFTVLFITYNIWKHYY. The Cytoplasmic portion of the chain corresponds to 55–74; it reads YYDVLHLKQKNPIDELLYSS. A helical membrane pass occupies residues 75–95; the sequence is TDEDEQSPLINNNTITTNYVD. At 96–133 the chain is on the lumenal side; it reads NNCTKDALKNRHFSLEKLKSVKVNGEPHGTPEIVRRGF. N-linked (GlcNAc...) asparagine glycosylation occurs at N97. Residues 134–154 traverse the membrane as a helical segment; the sequence is IEKSRIILEFFLVLSQVIIHS. At 155-166 the chain is on the cytoplasmic side; sequence FILLHYVNKNPE. The helical transmembrane segment at 167 to 187 threads the bilayer; that stretch reads FTQQGTITGLVEWCALFIIVS. Topologically, residues 188–205 are lumenal; it reads LRLANVNQNFKFINKYPG. Residues 206–226 form a helical membrane-spanning segment; sequence NLWSVSFINYLALFISMILPF. At 227–345 the chain is on the cytoplasmic side; sequence RSIFIHHINS…VKRKRIFSLN (119 aa). The helical transmembrane segment at 346 to 366 threads the bilayer; that stretch reads LFFFFSNYLVLQCFWAFLGSV. Residues 354 to 662 enclose the ABC transmembrane type-1 1 domain; that stretch reads LVLQCFWAFL…LSDMLSFVVQ (309 aa). The Lumenal segment spans residues 367–393; the sequence is LSFIPTVLLKRILEYVEDQSSAPSNLA. Residues 394–414 form a helical membrane-spanning segment; that stretch reads WFYVTVMFVGRILVAICQAQA. At 415-495 the chain is on the cytoplasmic side; it reads LFFGRRVCIR…AFKVSEICGY (81 aa). The disordered stretch occupies residues 445–468; it reads NKTKPSNEDPQEINDQKSINGDEE. A helical transmembrane segment spans residues 496–516; the sequence is LHSFLEAFVMTVVALALLYRL. Residues 517 to 519 are Lumenal-facing; that stretch reads LGF. A helical transmembrane segment spans residues 520–540; sequence AAIVGVLIIVAMLPLNYKLAK. Over 541–602 the chain is Cytoplasmic; it reads YIGDLQKKNL…LLLMRSIVWS (62 aa). Residues 603–623 traverse the membrane as a helical segment; it reads ISSFLWFVTPTIVTAASFAYY. Topologically, residues 624–644 are lumenal; it reads IYVQGEVLTTPVAFTALSLFT. A helical transmembrane segment spans residues 645–665; it reads LLRDPLDRLSDMLSFVVQSKV. Residues 666–1053 are Cytoplasmic-facing; the sequence is SLDRVQDFLN…SWWVRAWASH (388 aa). The region spanning 694–935 is the ABC transporter 1 domain; the sequence is FAFENSTISW…GLFGEDELVK (242 aa). 729–736 is an ATP binding site; it reads GPTGSGKT. Phosphoserine occurs at positions 936, 940, and 955. Residues 1026–1345 enclose the ABC transmembrane type-1 2 domain; the sequence is VSFLASLFLI…LVRLYSEVEM (320 aa). A helical transmembrane segment spans residues 1054-1074; that stretch reads NVIAKIIPRAQRAIAFISKKA. Residues 1075–1114 lie on the Lumenal side of the membrane; that stretch reads SHLIDWRGSSQISMASAENQPSSGHSTMYYLVLYLIIGFA. A helical transmembrane segment spans residues 1115–1135; that stretch reads QALLGAGKTILNFVAGINASR. The Cytoplasmic portion of the chain corresponds to 1136 to 1178; that stretch reads KIFNMILNKVLHSKIRFFDATPTGRIMNRFSKDIEAIDQELTP. A helical transmembrane segment spans residues 1179-1199; that stretch reads YIQGAFYSLIECLSTVILITF. I1200 is a topological domain (lumenal). Residues 1201 to 1221 traverse the membrane as a helical segment; the sequence is TPQFLSVAIVVSILYYFVGYF. Residues 1222–1292 are Cytoplasmic-facing; sequence YMAGSRELKR…VANRWLAFRI (71 aa). The chain crosses the membrane as a helical span at residues 1293–1313; sequence DMIGSLVIFGAGLFILFNINN. Over 1314-1315 the chain is Lumenal; it reads LD. The chain crosses the membrane as a helical span at residues 1316–1336; the sequence is SGMAGISLTYAISFTEGALWL. Topologically, residues 1337-1661 are cytoplasmic; the sequence is VRLYSEVEMN…FVEKLNSKKD (325 aa). The region spanning 1381 to 1636 is the ABC transporter 2 domain; it reads IEVNDLSLRY…KQSAFYSMCE (256 aa). 1415–1422 provides a ligand contact to ATP; that stretch reads GRTGAGKS.

This sequence belongs to the ABC transporter superfamily. ABCC family. Conjugate transporter (TC 3.A.1.208) subfamily.

It is found in the vacuole membrane. Vacuolar class C ABC transporter which regulates the translocation of phosphatidylcholine to the vacuole lumen, the release of lumenal calcium stores, and acts as a negative regulator of vacuole fusion. Exhibits ATP-dependent bile acid transport. The sequence is that of ATP-dependent bile acid permease (YBT1) from Saccharomyces cerevisiae (strain ATCC 204508 / S288c) (Baker's yeast).